Consider the following 357-residue polypeptide: Alanine racemase (357 aa).

Lys-34 acts as the Proton acceptor; specific for D-alanine in catalysis. Lys-34 is subject to N6-(pyridoxal phosphate)lysine. Arg-127 contributes to the substrate binding site. The active-site Proton acceptor; specific for L-alanine is the Tyr-252. A substrate-binding site is contributed by Met-301.

The protein belongs to the alanine racemase family. It depends on pyridoxal 5'-phosphate as a cofactor.

It carries out the reaction L-alanine = D-alanine. It participates in amino-acid biosynthesis; D-alanine biosynthesis; D-alanine from L-alanine: step 1/1. In terms of biological role, catalyzes the interconversion of L-alanine and D-alanine. May also act on other amino acids. The polypeptide is Alanine racemase (alr) (Dichelobacter nodosus (strain VCS1703A)).